The following is a 334-amino-acid chain: Holliday junction branch migration complex subunit RuvB (334 aa).

The large ATPase domain (RuvB-L) stretch occupies residues 1-181 (MHDRLISGTE…FGIVQRLEFY (181 aa)). Residues Ile-20, Arg-21, Gly-62, Lys-65, Thr-66, Thr-67, 128–130 (EDY), Arg-171, Tyr-181, and Arg-218 each bind ATP. Mg(2+) is bound at residue Thr-66. The tract at residues 182-252 (SVEDLTHIVT…MAQRALDMLN (71 aa)) is small ATPAse domain (RuvB-S). The interval 255–334 (KDGLDTLDRR…FGLTPPEPKN (80 aa)) is head domain (RuvB-H). The DNA site is built by Arg-310 and Arg-315.

Belongs to the RuvB family. As to quaternary structure, homohexamer. Forms an RuvA(8)-RuvB(12)-Holliday junction (HJ) complex. HJ DNA is sandwiched between 2 RuvA tetramers; dsDNA enters through RuvA and exits via RuvB. An RuvB hexamer assembles on each DNA strand where it exits the tetramer. Each RuvB hexamer is contacted by two RuvA subunits (via domain III) on 2 adjacent RuvB subunits; this complex drives branch migration. In the full resolvosome a probable DNA-RuvA(4)-RuvB(12)-RuvC(2) complex forms which resolves the HJ.

The protein localises to the cytoplasm. It carries out the reaction ATP + H2O = ADP + phosphate + H(+). Functionally, the RuvA-RuvB-RuvC complex processes Holliday junction (HJ) DNA during genetic recombination and DNA repair, while the RuvA-RuvB complex plays an important role in the rescue of blocked DNA replication forks via replication fork reversal (RFR). RuvA specifically binds to HJ cruciform DNA, conferring on it an open structure. The RuvB hexamer acts as an ATP-dependent pump, pulling dsDNA into and through the RuvAB complex. RuvB forms 2 homohexamers on either side of HJ DNA bound by 1 or 2 RuvA tetramers; 4 subunits per hexamer contact DNA at a time. Coordinated motions by a converter formed by DNA-disengaged RuvB subunits stimulates ATP hydrolysis and nucleotide exchange. Immobilization of the converter enables RuvB to convert the ATP-contained energy into a lever motion, pulling 2 nucleotides of DNA out of the RuvA tetramer per ATP hydrolyzed, thus driving DNA branch migration. The RuvB motors rotate together with the DNA substrate, which together with the progressing nucleotide cycle form the mechanistic basis for DNA recombination by continuous HJ branch migration. Branch migration allows RuvC to scan DNA until it finds its consensus sequence, where it cleaves and resolves cruciform DNA. This chain is Holliday junction branch migration complex subunit RuvB, found in Acinetobacter baylyi (strain ATCC 33305 / BD413 / ADP1).